A 301-amino-acid polypeptide reads, in one-letter code: Thymidylate synthase (301 aa).

DUMP contacts are provided by residues arginine 38 and 163–164 (RR). Catalysis depends on cysteine 183, which acts as the Nucleophile. Residues 203–206 (RSGD), asparagine 214, and 244–246 (HIY) contribute to the dUMP site. Aspartate 206 contributes to the (6R)-5,10-methylene-5,6,7,8-tetrahydrofolate binding site. Residue alanine 300 coordinates (6R)-5,10-methylene-5,6,7,8-tetrahydrofolate.

The protein belongs to the thymidylate synthase family. As to quaternary structure, homodimer.

The enzyme catalyses dUMP + (6R)-5,10-methylene-5,6,7,8-tetrahydrofolate = 7,8-dihydrofolate + dTMP. It participates in pyrimidine metabolism; dTTP biosynthesis. Catalyzes the reductive methylation of deoxyuridylate to thymidylate. The polypeptide is Thymidylate synthase (Varicella-zoster virus (strain Dumas) (HHV-3)).